The following is a 163-amino-acid chain: Phosphopantetheine adenylyltransferase (163 aa).

Residue Thr-9 participates in substrate binding. ATP-binding positions include 9 to 10 (TF) and His-17. Residues Lys-41, Thr-73, and Arg-87 each coordinate substrate. ATP is bound by residues 88-90 (GLR), Glu-98, and 123-129 (FSFISSS).

This sequence belongs to the bacterial CoaD family. Homohexamer. Mg(2+) is required as a cofactor.

The protein localises to the cytoplasm. The enzyme catalyses (R)-4'-phosphopantetheine + ATP + H(+) = 3'-dephospho-CoA + diphosphate. It functions in the pathway cofactor biosynthesis; coenzyme A biosynthesis; CoA from (R)-pantothenate: step 4/5. In terms of biological role, reversibly transfers an adenylyl group from ATP to 4'-phosphopantetheine, yielding dephospho-CoA (dPCoA) and pyrophosphate. The sequence is that of Phosphopantetheine adenylyltransferase from Desulfitobacterium hafniense (strain Y51).